Consider the following 509-residue polypeptide: NADH-quinone oxidoreductase subunit M (509 aa).

Residues 1 to 21 form a helical membrane-spanning segment; that stretch reads MLLPWLILIPFIGGFLCWQTE. At 22–29 the chain is on the cytoplasmic side; sequence RFGVKVPR. A helical membrane pass occupies residues 30–50; that stretch reads WIALITMGLTLALSLQLWLQG. At 51-82 the chain is on the periplasmic side; the sequence is GYSLTQSAGIPQWQSEFDMPWIPRFGISIHLA. Residues 83–103 traverse the membrane as a helical segment; that stretch reads IDGLSLLMVVLTGLLGVLAVL. Topologically, residues 104–121 are cytoplasmic; sequence CSWKEIEKYQGFFHLNLM. A helical transmembrane segment spans residues 122–142; sequence WILGGVIGVFLAIDMFLFFFF. The Periplasmic segment spans residues 143–173; the sequence is WEMMLVPMYFLIALWGHKASDGKTRITAATK. A helical membrane pass occupies residues 174-194; it reads FFIYTQASGLVMLIAILALVF. Residues 195-221 are Cytoplasmic-facing; it reads VHYNATGVWTFNYEELLNTPMSSGVEY. A helical transmembrane segment spans residues 222–242; sequence LLMLGFFIAFAVKMPVVPLHG. Topologically, residues 243–258 are periplasmic; the sequence is WLPDAHSQAPTAGSVD. A helical membrane pass occupies residues 259–279; the sequence is LAGILLKTAAYGLLRFSLPLF. The Cytoplasmic segment spans residues 280-285; sequence PNASAE. A helical membrane pass occupies residues 286–306; sequence FAPIAMWLGVIGIFYGAWMAF. Residues 307-313 lie on the Periplasmic side of the membrane; the sequence is AQTDIKR. A helical transmembrane segment spans residues 314 to 334; that stretch reads LIAYTSVSHMGFVLIAIYTGS. Residues 335-339 lie on the Cytoplasmic side of the membrane; that stretch reads QLAYQ. The chain crosses the membrane as a helical span at residues 340–360; sequence GAVIQMIAHGLSAAGLFILCG. Residues 361–382 lie on the Periplasmic side of the membrane; the sequence is QLYERIHTRDMRMMGGLWSKMK. The next 2 helical transmembrane spans lie at 383–403 and 404–424; these read WLPA…GTGN and FVGE…ITVI. Position 425 (Ser425) is a topological domain, periplasmic. Residues 426–446 traverse the membrane as a helical segment; the sequence is TFGLVFASVYSLAMLHRAYFG. Over 447 to 464 the chain is Cytoplasmic; it reads KAKSQIASQELPGMSLRE. Residues 465–485 traverse the membrane as a helical segment; it reads LFMILLLVVLLVLLGFYPQPI. At 486–509 the chain is on the periplasmic side; the sequence is LDTSHSAIGNIQQWFVNSVTTTRP.

The protein belongs to the complex I subunit 4 family. Composed of 13 different subunits. Subunits NuoA, H, J, K, L, M, N constitute the membrane sector of the complex.

The protein resides in the cell inner membrane. It catalyses the reaction a quinone + NADH + 5 H(+)(in) = a quinol + NAD(+) + 4 H(+)(out). Functionally, NDH-1 shuttles electrons from NADH, via FMN and iron-sulfur (Fe-S) centers, to quinones in the respiratory chain. The immediate electron acceptor for the enzyme in this species is believed to be ubiquinone. Couples the redox reaction to proton translocation (for every two electrons transferred, four hydrogen ions are translocated across the cytoplasmic membrane), and thus conserves the redox energy in a proton gradient. The sequence is that of NADH-quinone oxidoreductase subunit M (nuoM) from Escherichia coli O157:H7.